A 244-amino-acid polypeptide reads, in one-letter code: ATP synthase subunit a, chloroplastic (244 aa).

5 consecutive transmembrane segments (helical) span residues 35 to 55, 92 to 112, 131 to 151, 196 to 216, and 217 to 237; these read QVLI…VIAV, VPFI…GALL, INTT…AGLS, LVVV…VMFL, and GLFI…AYIG.

Belongs to the ATPase A chain family. F-type ATPases have 2 components, CF(1) - the catalytic core - and CF(0) - the membrane proton channel. CF(1) has five subunits: alpha(3), beta(3), gamma(1), delta(1), epsilon(1). CF(0) has four main subunits: a, b, b' and c.

Its subcellular location is the plastid. It is found in the chloroplast thylakoid membrane. Key component of the proton channel; it plays a direct role in the translocation of protons across the membrane. This chain is ATP synthase subunit a, chloroplastic, found in Gossypium barbadense (Sea Island cotton).